We begin with the raw amino-acid sequence, 241 residues long: Probable xyloglucan-specific endo-beta-1,4-glucanase A (241 aa).

A signal peptide spans 1–15 (MKVLALSALLSLASA). N-linked (GlcNAc...) asparagine glycosylation is present at N47.

The protein belongs to the glycosyl hydrolase 12 (cellulase H) family.

It is found in the secreted. It catalyses the reaction xyloglucan + H2O = xyloglucan oligosaccharides.. In terms of biological role, catalyzes endohydrolysis of 1,4-beta-D-glucosidic linkages in xyloglucan with retention of the beta-configuration of the glycosyl residues. Specific for xyloglucan and does not hydrolyze other cell wall components. The protein is Probable xyloglucan-specific endo-beta-1,4-glucanase A (xgeA) of Aspergillus niger (strain ATCC MYA-4892 / CBS 513.88 / FGSC A1513).